Reading from the N-terminus, the 190-residue chain is ATP synthase subunit delta (190 aa).

It belongs to the ATPase delta chain family. F-type ATPases have 2 components, F(1) - the catalytic core - and F(0) - the membrane proton channel. F(1) has five subunits: alpha(3), beta(3), gamma(1), delta(1), epsilon(1). F(0) has three main subunits: a(1), b(2) and c(10-14). The alpha and beta chains form an alternating ring which encloses part of the gamma chain. F(1) is attached to F(0) by a central stalk formed by the gamma and epsilon chains, while a peripheral stalk is formed by the delta and b chains.

The protein localises to the cell inner membrane. F(1)F(0) ATP synthase produces ATP from ADP in the presence of a proton or sodium gradient. F-type ATPases consist of two structural domains, F(1) containing the extramembraneous catalytic core and F(0) containing the membrane proton channel, linked together by a central stalk and a peripheral stalk. During catalysis, ATP synthesis in the catalytic domain of F(1) is coupled via a rotary mechanism of the central stalk subunits to proton translocation. Functionally, this protein is part of the stalk that links CF(0) to CF(1). It either transmits conformational changes from CF(0) to CF(1) or is implicated in proton conduction. The polypeptide is ATP synthase subunit delta (Methylobacterium sp. (strain 4-46)).